Here is a 419-residue protein sequence, read N- to C-terminus: G-protein coupled receptor 151 (419 aa).

Over 1–41 the chain is Extracellular; sequence MLAAAFADSNSSSMNVSFAHLHFAGGYLPSDSQDWRTIIPA. N-linked (GlcNAc...) asparagine glycans are attached at residues asparagine 10 and asparagine 15. Residues 42 to 62 traverse the membrane as a helical segment; it reads LLVAVCLVGFVGNLCVIGILL. The Cytoplasmic portion of the chain corresponds to 63–71; sequence HNAWKGKPS. The helical transmembrane segment at 72–92 threads the bilayer; that stretch reads MIHSLILNLSLADLSLLLFSA. Over 93 to 116 the chain is Extracellular; it reads PIRATAYSKSVWDLGWFVCKSSDW. A disulfide bridge links cysteine 111 with cysteine 187. A helical transmembrane segment spans residues 117–137; that stretch reads FIHTCMAAKSLTIVVVAKVCF. Residues 138 to 153 are Cytoplasmic-facing; sequence MYASDPAKQVSIHNYT. The helical transmembrane segment at 154 to 174 threads the bilayer; sequence IWSVLVAIWTVASLLPLPEWF. Residues 175–201 lie on the Extracellular side of the membrane; it reads FSTIRHHEGVEMCLVDVPAVAEEFMSM. The helical transmembrane segment at 202–222 threads the bilayer; that stretch reads FGKLYPLLAFGLPLFFASFYF. Residues 223–252 are Cytoplasmic-facing; it reads WRAYDQCKKRGTKTQNLRNQIRSKQVTVML. The chain crosses the membrane as a helical span at residues 253–273; that stretch reads LSIAIISALLWLPEWVAWLWV. Residues 274-286 lie on the Extracellular side of the membrane; it reads WHLKAAGPAPPQG. Residues 287–307 traverse the membrane as a helical segment; that stretch reads FIALSQVLMFSISSANPLIFL. At 308-419 the chain is on the cytoplasmic side; the sequence is VMSEEFREGL…EDQETGEGVK (112 aa). The disordered stretch occupies residues 330–419; it reads PTVSESQETP…EDQETGEGVK (90 aa). Positions 332-341 are enriched in polar residues; that stretch reads VSESQETPAG. Residues 410-419 are compositionally biased toward acidic residues; the sequence is EDQETGEGVK.

The protein belongs to the G-protein coupled receptor 1 family. In terms of tissue distribution, high expression in the spinal cord.

Its subcellular location is the cell membrane. Functionally, proton-sensing G-protein coupled receptor. This Homo sapiens (Human) protein is G-protein coupled receptor 151 (GPR151).